Reading from the N-terminus, the 169-residue chain is 2-C-methyl-D-erythritol 2,4-cyclodiphosphate synthase (169 aa).

A divalent metal cation is bound by residues Asp13 and His15. 4-CDP-2-C-methyl-D-erythritol 2-phosphate-binding positions include 13–15 (DVH) and 39–40 (HS). A divalent metal cation is bound at residue His47. Residues 61–63 (DIG), 66–70 (FPDTD), Phe144, and Arg147 contribute to the 4-CDP-2-C-methyl-D-erythritol 2-phosphate site.

Belongs to the IspF family. As to quaternary structure, homotrimer. Requires a divalent metal cation as cofactor.

The catalysed reaction is 4-CDP-2-C-methyl-D-erythritol 2-phosphate = 2-C-methyl-D-erythritol 2,4-cyclic diphosphate + CMP. The protein operates within isoprenoid biosynthesis; isopentenyl diphosphate biosynthesis via DXP pathway; isopentenyl diphosphate from 1-deoxy-D-xylulose 5-phosphate: step 4/6. Involved in the biosynthesis of isopentenyl diphosphate (IPP) and dimethylallyl diphosphate (DMAPP), two major building blocks of isoprenoid compounds. Catalyzes the conversion of 4-diphosphocytidyl-2-C-methyl-D-erythritol 2-phosphate (CDP-ME2P) to 2-C-methyl-D-erythritol 2,4-cyclodiphosphate (ME-CPP) with a corresponding release of cytidine 5-monophosphate (CMP). In Cupriavidus pinatubonensis (strain JMP 134 / LMG 1197) (Cupriavidus necator (strain JMP 134)), this protein is 2-C-methyl-D-erythritol 2,4-cyclodiphosphate synthase.